The sequence spans 87 residues: Small ribosomal subunit protein bS20 (87 aa).

It belongs to the bacterial ribosomal protein bS20 family.

Its function is as follows. Binds directly to 16S ribosomal RNA. The chain is Small ribosomal subunit protein bS20 from Nitrosomonas europaea (strain ATCC 19718 / CIP 103999 / KCTC 2705 / NBRC 14298).